Reading from the N-terminus, the 543-residue chain is MFS-type transporter pyvG (543 aa).

A disordered region spans residues 24–71 (PPTEQQPGFQLPPPYRLAATRTQPQQQQEQEQEQEQAKPATRPPWNEP). Asn-94 is a glycosylation site (N-linked (GlcNAc...) asparagine). The next 12 membrane-spanning stretches (helical) occupy residues 101-121 (LLVY…VAIF), 141-161 (LGMS…SPLS), 178-198 (IFLL…FLIL), 203-223 (GFFG…VTGL), 230-250 (LYVW…IAGF), 259-279 (WSMW…LFLP), 335-355 (PAIL…YSYF), 374-394 (GLIF…YFAF), 415-435 (LVPA…FAWT), 440-460 (LHWV…SLVI), 476-496 (ASLF…AIMW), and 512-532 (LLAG…WWGP).

Belongs to the major facilitator superfamily. CAR1 family.

The protein resides in the cell membrane. Functionally, MFS-type transporter; part of the gene cluster that mediates the biosynthesis of pyranoviolin A, a pyranonigrin analog with a C-3 methoxy group. May be involved in the secretion of pyranoviolin A. This is MFS-type transporter pyvG from Aspergillus violaceofuscus (strain CBS 115571).